Consider the following 420-residue polypeptide: UDP-N-acetylglucosamine 1-carboxyvinyltransferase 2 (420 aa).

Residue 22–23 (KN) participates in phosphoenolpyruvate binding. Arg92 serves as a coordination point for UDP-N-acetyl-alpha-D-glucosamine. Cys116 serves as the catalytic Proton donor. Cys116 carries the 2-(S-cysteinyl)pyruvic acid O-phosphothioketal modification. UDP-N-acetyl-alpha-D-glucosamine contacts are provided by residues 121-125 (RPIDL), Asp307, and Ile329.

It belongs to the EPSP synthase family. MurA subfamily.

It localises to the cytoplasm. It carries out the reaction phosphoenolpyruvate + UDP-N-acetyl-alpha-D-glucosamine = UDP-N-acetyl-3-O-(1-carboxyvinyl)-alpha-D-glucosamine + phosphate. Its pathway is cell wall biogenesis; peptidoglycan biosynthesis. Its function is as follows. Cell wall formation. Adds enolpyruvyl to UDP-N-acetylglucosamine. In Streptococcus thermophilus (strain ATCC BAA-250 / LMG 18311), this protein is UDP-N-acetylglucosamine 1-carboxyvinyltransferase 2.